The primary structure comprises 280 residues: Shikimate kinase (280 aa).

74–84 (PGGSGLGSSSA) is an ATP binding site.

This sequence belongs to the GHMP kinase family. Archaeal shikimate kinase subfamily.

It is found in the cytoplasm. The enzyme catalyses shikimate + ATP = 3-phosphoshikimate + ADP + H(+). The protein operates within metabolic intermediate biosynthesis; chorismate biosynthesis; chorismate from D-erythrose 4-phosphate and phosphoenolpyruvate: step 5/7. This chain is Shikimate kinase (aroK), found in Archaeoglobus fulgidus (strain ATCC 49558 / DSM 4304 / JCM 9628 / NBRC 100126 / VC-16).